The primary structure comprises 426 residues: MATIQALRGTKDIFAPEIAYWQQVEAVVRDCLGRAMYQEIRTPIFEQTSLFERGIGEATDVVSKEMYSFTDRGDRPITLRPEGTAGAVRAYIERKLFAQGGVQRLWYTGPMFRYERPQAGRQRQFHQVGVEVLGSADPRADVEVMAIATEILQKLGLKNLSLQLNSVGNGGDRQRYREALVDYLTPFKADLDADSQERLERNPLRILDSKDQKTQEIAQNAPSILDYLGDDSKKHFDQVQSSLTALGIDYVLNPCLVRGLDYYTHTAFEIQSSDLGAQATVCGGGRYDGLVAELGGPETPAVGWAIGLERLVILLQQLGEASGPQLDFYLVSKGEQAEAAAVILAHKLRFAGFSVELDLSGSAFGKQFKRADRSGAIACLVLGDEEAVNQQVQLKWLQTKAQETLAQADLLGNLESWRQKMQQAKH.

This sequence belongs to the class-II aminoacyl-tRNA synthetase family. Homodimer.

It is found in the cytoplasm. The catalysed reaction is tRNA(His) + L-histidine + ATP = L-histidyl-tRNA(His) + AMP + diphosphate + H(+). This Picosynechococcus sp. (strain ATCC 27264 / PCC 7002 / PR-6) (Agmenellum quadruplicatum) protein is Histidine--tRNA ligase.